Consider the following 2528-residue polypeptide: Highly reducing polyketide synthase pspA (2528 aa).

The tract at residues 1–53 (MLAQDVEFVDLPPPEATAGAATTDNETSSFNSNPVPTPSEASSIGPPHQLPVP) is disordered. Residues 24–42 (DNETSSFNSNPVPTPSEAS) are compositionally biased toward polar residues. The region spanning 63-483 (VEPMAICGMA…GSNAHVLLGS (421 aa)) is the Ketosynthase family 3 (KS3) domain. Active-site for beta-ketoacyl synthase activity residues include C235, H371, and H406. Positions 590-909 (TFTGQGAQWA…HKDLLKAVGE (320 aa)) are malonyl-CoA:ACP transacylase (MAT) domain. The N-terminal hotdog fold stretch occupies residues 961–1089 (HDILGSRVLE…GQVCAGSDRE (129 aa)). Residues 961-1230 (HDILGSRVLE…VSNGHVTIDI (270 aa)) form a dehydratase (DH) domain region. The 284-residue stretch at 961–1244 (HDILGSRVLE…MSAIGDAADA (284 aa)) folds into the PKS/mFAS DH domain. Residue H993 is the Proton acceptor; for dehydratase activity of the active site. Residues 1099 to 1244 (PRQLSRRGWY…MSAIGDAADA (146 aa)) form a C-terminal hotdog fold region. Catalysis depends on D1160, which acts as the Proton donor; for dehydratase activity. The tract at residues 1409 to 1587 (VFLELLAHRK…GFSGINLVSH (179 aa)) is methyltransferase (CMet) domain. Residues 1803-2119 (GLVDTLCWKS…RGQHIGKIVI (317 aa)) are enoyl reductase (ER) (ER) domain. Residues 2143–2322 (RAYLFVGGLG…ASTVNIGVIQ (180 aa)) form a ketoreductase (KR) domain region. One can recognise a Carrier domain in the interval 2447–2525 (ETAELLAGEI…DLGVLAQKKL (79 aa)). Position 2485 is an O-(pantetheine 4'-phosphoryl)serine (S2485).

It carries out the reaction 9 malonyl-CoA + acetyl-CoA + S-adenosyl-L-methionine + 13 NADPH + 20 H(+) = soppiline A + S-adenosyl-L-homocysteine + 9 CO2 + 13 NADP(+) + 10 CoA + 7 H2O. It participates in secondary metabolite biosynthesis. In terms of biological role, highly reducing polyketide synthase; part of the gene cluster that mediates the biosynthesis of the alkylresorcinols called soppilines. The biosynthesis starts with the HR-PKS pspA-catalyzed carbon chain assembly through nine chain elongation cycles, using acetyl CoA and malonyl CoA as a starter and extender units, respectively, to produce the polyketide soppiline A. In the first round, the KR, DH, and CMeT domains work to produce 2-methyl-2-butenyl thioester. In rounds 2 to 5, the KR, DH, and ER domains fully catalyze the reduction of the elongated beta-ketothioester, resulting in the insertion of eight methylene units. The unusual Z,E,Z-triene motif is likely constructed during rounds 6 to 8. Typically, the DH domain introduces a double bond at an alpha,beta-position of an elongated polyketide chain, with the dehydration of a beta-hydroxy group. The last extension cycle would be carried out with L-oriented beta-ketoreduction by the KR domain to produce beta-hydroxy carboxylic acid soppiline A. The type III PKS pspB intercepts the elongated polyketide chain at round 8 from the HR-PKS pspA, followed by a tri-keto extension and decarboxylative aldol cyclization to produce 1,3,5-trisubstituted alkylresorcinol soppiline B. Subsequently, the cytochrome P450 monooxygenase pspC catalyzes three-step oxidations at the C-4 methyl group to carboxylic acid to yield soppiline C. The polypeptide is Highly reducing polyketide synthase pspA (Penicillium soppii).